We begin with the raw amino-acid sequence, 260 residues long: 3'-5' ssDNA/RNA exonuclease TatD (260 aa).

Residues E91, H127, and H152 each coordinate a divalent metal cation.

This sequence belongs to the metallo-dependent hydrolases superfamily. TatD-type hydrolase family. TatD subfamily. As to quaternary structure, monomer. It depends on Mg(2+) as a cofactor.

Its subcellular location is the cytoplasm. Its function is as follows. 3'-5' exonuclease that prefers single-stranded DNA and RNA. May play a role in the H(2)O(2)-induced DNA damage repair. The polypeptide is 3'-5' ssDNA/RNA exonuclease TatD (Citrobacter koseri (strain ATCC BAA-895 / CDC 4225-83 / SGSC4696)).